A 433-amino-acid chain; its full sequence is Putative ankyrin repeat protein R578 (433 aa).

ANK repeat units lie at residues 166–195 (NKEI…ILSE), 197–224 (DHLI…LSKL), 356–386 (VNPN…DIHS), and 388–415 (PSLI…ICDE).

In Acanthamoeba polyphaga mimivirus (APMV), this protein is Putative ankyrin repeat protein R578.